The primary structure comprises 631 residues: Pro-interleukin-16 (631 aa).

2 disordered regions span residues 30-269 (ENPG…FPLT) and 317-344 (PKEG…ASDT). The span at 132-144 (SSSSSSIKQRISS) shows a compositional bias: low complexity. S221 bears the Phosphoserine mark. Positions 322–344 (SPTSSSNEDSAANGSAETSASDT) are enriched in polar residues. The interval 405-501 (KQLDSIHVTI…IVTRKLTAES (97 aa)) is interaction with PPP1R12A, PPP1R12B and PPP1R12C. PDZ domains lie at 411-496 (HVTI…VTRK) and 533-618 (TVTL…IRRK).

In terms of assembly, homotetramer. Pro-interleukin-16 interacts (via PDZ 2 domain) with PPP1R12A, PPP1R12B and PPP1R12C. Pro-interleukin-16 interacts with GRIN2A. Pro-interleukin-16 interacts with GABPB1. Pro-interleukin-16 interacts (via PDZ 3 domain) with HDAC3.

It is found in the secreted. The protein localises to the cytoplasm. Its subcellular location is the nucleus. In terms of biological role, interleukin-16 stimulates a migratory response in CD4+ lymphocytes, monocytes, and eosinophils. Primes CD4+ T-cells for IL-2 and IL-15 responsiveness. Also induces T-lymphocyte expression of interleukin 2 receptor. Ligand for CD4. Pro-interleukin-16 is involved in cell cycle progression in T-cells. Appears to be involved in transcriptional regulation of SKP2 and is probably part of a transcriptional repression complex on the core promoter of the SKP2 gene. May act as a scaffold for GABPB1 (the DNA-binding subunit the GABP transcription factor complex) and HDAC3 thus maintaining transcriptional repression and blocking cell cycle progression in resting T-cells. In Chlorocebus aethiops (Green monkey), this protein is Pro-interleukin-16 (IL16).